A 207-amino-acid polypeptide reads, in one-letter code: Guanylate kinase (207 aa).

Residues 5 to 184 (GNLFIVSAPS…ALADLSAIIR (180 aa)) form the Guanylate kinase-like domain. Position 12–19 (12–19 (APSGAGKS)) interacts with ATP. The tract at residues 30 to 49 (PSDKQVSVSHTTRKPRPGEV) is disordered.

It belongs to the guanylate kinase family.

It localises to the cytoplasm. The enzyme catalyses GMP + ATP = GDP + ADP. In terms of biological role, essential for recycling GMP and indirectly, cGMP. This is Guanylate kinase from Shewanella frigidimarina (strain NCIMB 400).